Reading from the N-terminus, the 562-residue chain is MSHQPKPLSEVEHIKTQSRLLRGSLAESLEDPVTGGLATPDTNLIKFHGSYQQDDRDVREERRQQKLEPDYSFMLRTRLPGGVCTPAQWLVMDALAREHANHTLRITTRQAFQLHGVIKDDLRPTIARINEAMMDTLAACGDVNRNVLCNPNPVDSRVHETVYQWAVRISEHLLPKTRAYYEVWLGKEKVAGGEDEPIYGATYLPRKFKAAVAVPPLNDVDVFAQDLGFIAIIEGDALVGFNVSVGGGMGATHGDAATYPRLADVVGFIPPEQTLAVAEEVVKIHRDFGDRTNRKHARLKYVLEERGVPWFTAELEKRLGFPLQPARPFAFEHNGDRFGWTEGHDGRWHLTLHLDSGRVADRPGAPHLTGLREIARIHTGDFRLTANQNLVIAGVTPEARDAIGALVTAHALDSFRSASPVRRNALACVALPTCGLAMAEAERYLPTFVGRLEDRLRAHGLQDANLLLRITGCPNGCARPYLAEVGLVGKAPGRYNLHLGGDARGQRLSHLYRENIDEDAILAALEPLFEGYARERQPGEGFGDFVVRAGHVPSPAVQPRPS.

4 residues coordinate [4Fe-4S] cluster: C428, C434, C473, and C477. Residue C477 participates in siroheme binding.

The protein belongs to the nitrite and sulfite reductase 4Fe-4S domain family. As to quaternary structure, alpha(8)-beta(8). The alpha component is a flavoprotein, the beta component is a hemoprotein. The cofactor is siroheme. It depends on [4Fe-4S] cluster as a cofactor.

It carries out the reaction hydrogen sulfide + 3 NADP(+) + 3 H2O = sulfite + 3 NADPH + 4 H(+). It participates in sulfur metabolism; hydrogen sulfide biosynthesis; hydrogen sulfide from sulfite (NADPH route): step 1/1. Component of the sulfite reductase complex that catalyzes the 6-electron reduction of sulfite to sulfide. This is one of several activities required for the biosynthesis of L-cysteine from sulfate. In Myxococcus xanthus (strain DK1622), this protein is Sulfite reductase [NADPH] hemoprotein beta-component.